Reading from the N-terminus, the 110-residue chain is Large ribosomal subunit protein uL22 (110 aa).

It belongs to the universal ribosomal protein uL22 family. As to quaternary structure, part of the 50S ribosomal subunit.

In terms of biological role, this protein binds specifically to 23S rRNA; its binding is stimulated by other ribosomal proteins, e.g. L4, L17, and L20. It is important during the early stages of 50S assembly. It makes multiple contacts with different domains of the 23S rRNA in the assembled 50S subunit and ribosome. Functionally, the globular domain of the protein is located near the polypeptide exit tunnel on the outside of the subunit, while an extended beta-hairpin is found that lines the wall of the exit tunnel in the center of the 70S ribosome. The polypeptide is Large ribosomal subunit protein uL22 (Halorhodospira halophila (strain DSM 244 / SL1) (Ectothiorhodospira halophila (strain DSM 244 / SL1))).